The primary structure comprises 37 residues: Large ribosomal subunit protein bL36 (37 aa).

It belongs to the bacterial ribosomal protein bL36 family.

This Koribacter versatilis (strain Ellin345) protein is Large ribosomal subunit protein bL36.